Reading from the N-terminus, the 510-residue chain is ATP synthase subunit alpha, mitochondrial (510 aa).

171 to 178 lines the ATP pocket; the sequence is GDRQTGKT.

This sequence belongs to the ATPase alpha/beta chains family. F-type ATPases have 2 components, CF(1) - the catalytic core - and CF(0) - the membrane proton channel. CF(1) has five subunits: alpha(3), beta(3), gamma(1), delta(1), epsilon(1). CF(0) has three main subunits: a, b and c.

The protein localises to the mitochondrion. It is found in the mitochondrion inner membrane. Mitochondrial membrane ATP synthase (F(1)F(0) ATP synthase or Complex V) produces ATP from ADP in the presence of a proton gradient across the membrane which is generated by electron transport complexes of the respiratory chain. F-type ATPases consist of two structural domains, F(1) - containing the extramembraneous catalytic core, and F(0) - containing the membrane proton channel, linked together by a central stalk and a peripheral stalk. During catalysis, ATP synthesis in the catalytic domain of F(1) is coupled via a rotary mechanism of the central stalk subunits to proton translocation. Subunits alpha and beta form the catalytic core in F(1). Rotation of the central stalk against the surrounding alpha(3)beta(3) subunits leads to hydrolysis of ATP in three separate catalytic sites on the beta subunits. Subunit alpha does not bear the catalytic high-affinity ATP-binding sites. The chain is ATP synthase subunit alpha, mitochondrial (ATPA) from Helianthus annuus (Common sunflower).